A 75-amino-acid polypeptide reads, in one-letter code: Beta-defensin 30 (75 aa).

A signal peptide spans 1–22; it reads MGSLQLILVLFVLLSDVPPVRS. 3 disulfides stabilise this stretch: Cys-35-Cys-62, Cys-42-Cys-56, and Cys-46-Cys-63.

It belongs to the beta-defensin family.

The protein localises to the secreted. In terms of biological role, has antibacterial activity. The protein is Beta-defensin 30 (Defb30) of Rattus norvegicus (Rat).